The following is a 309-amino-acid chain: Putative ankyrin repeat protein R603 (309 aa).

ANK repeat units lie at residues 53-82 (QVNG…MNPE), 83-112 (NKSQ…DVSL), 114-144 (DHFA…DVTS), 145-176 (NNNL…DIHA), 177-206 (DEYF…DVNM), 214-243 (NVLS…DISF), and 245-274 (DDND…DISF).

The chain is Putative ankyrin repeat protein R603 from Acanthamoeba polyphaga (Amoeba).